A 655-amino-acid chain; its full sequence is RalA-binding protein 1 (655 aa).

The disordered stretch occupies residues 1–158 (MTECFLPPTS…KKSKDLTAAD (158 aa)). Residue Thr2 is modified to N-acetylthreonine. Residues 24–33 (LTRTPSSEEI) are compositionally biased toward polar residues. Phosphoserine occurs at positions 29, 30, and 34. Thr44 carries the post-translational modification Phosphothreonine. 2 positions are modified to phosphoserine: Ser48 and Ser62. Basic and acidic residues predominate over residues 52–68 (DILHEPPDVVSDDEKDH). 69–74 (GKKKGK) lines the ATP pocket. Over residues 69–79 (GKKKGKFKKKE) the composition is skewed to basic residues. Residues Ser92 and Ser93 each carry the phosphoserine modification. The segment covering 102–118 (KMKRSKGIHVFKKPSFS) has biased composition (basic residues). Positions 102 to 119 (KMKRSKGIHVFKKPSFSK) are nuclear localization signal. Over residues 119 to 155 (KKKEKDFKIKEKPKEEKHKEEKHKEEKHKEKKSKDLT) the composition is skewed to basic and acidic residues. The interval 154 to 219 (LTAADVVKQW…PAVFRECIDY (66 aa)) is mediates association with membranes and could form transmembrane domains. One can recognise a Rho-GAP domain in the interval 192-380 (IPLADAVERT…VVLKQVMKPL (189 aa)). Positions 403-499 (RRQEFLLNCL…LTEQEELLAM (97 aa)) are mediates interaction with RALA and RALB. An ATP-binding site is contributed by 418–425 (GGIKDLSK). Phosphoserine is present on residues Ser461 and Ser463. The interval 500–655 (EQFLRRQIAS…PSRDRKETSI (156 aa)) is mediates interaction with REPS1 and REPS2. Disordered stretches follow at residues 525–551 (QSRQ…DEEE) and 601–655 (AEQQ…ETSI). A compositionally biased stretch (acidic residues) spans 536–551 (EEYSSESESESEDEEE). A compositionally biased stretch (basic and acidic residues) spans 624–655 (GVLEPKAAKEQPKAGKEPAKPSPSRDRKETSI). Position 645 is a phosphoserine (Ser645).

As to quaternary structure, interacts with the GTP-bound form of RALA (via effector domain); during mitosis, recruits RALBP1 to the mitochondrion where it promotes DNM1L phosphorylation and mitochondrial fission. Interacts with DNM1L; mediates its mitotic kinase cyclin B-CDK1-mediated phosphorylation during mitosis to promote mitochondrial fission. Interacts with the mitotic kinase cyclin B-CDK1 during mitosis. Interacts with the GTP-bound form of RALB (via effector domain). Interacts with REPS1; the interaction is direct and does not affect RALA-binding nor GTPase activator activity of RALBP1. Interacts with REPS2; the interaction is direct and does not affect RALA-binding nor GTPase activator activity of RALBP1. Interacts with EPN1, NUMB and TFAP2A during interphase and mitosis. Interacts with AP2M1; as part of the AP2 complex. Interacts with CDC42. Interacts with RAC1. Tyrosine-phosphorylated upon stimulation of cells with EGF. In terms of processing, may undergo proteolytic cleavage to give peptides which reassemble to form a transporter complex. As to expression, expressed ubiquitously but at low levels. Shows a strong expression in the erythrocytes.

It localises to the cell membrane. Its subcellular location is the cytoplasm. The protein resides in the cytosol. The protein localises to the cytoskeleton. It is found in the spindle pole. It localises to the nucleus. Its subcellular location is the mitochondrion. It catalyses the reaction an S-substituted glutathione(in) + ATP + H2O = an S-substituted glutathione(out) + ADP + phosphate + H(+). The catalysed reaction is ATP + H2O + xenobioticSide 1 = ADP + phosphate + xenobioticSide 2.. The enzyme catalyses leukotriene C4(in) + ATP + H2O = leukotriene C4(out) + ADP + phosphate + H(+). Its function is as follows. Multifunctional protein that functions as a downstream effector of RALA and RALB. As a GTPase-activating protein/GAP can inactivate CDC42 and RAC1 by stimulating their GTPase activity. As part of the Ral signaling pathway, may also regulate ligand-dependent EGF and insulin receptors-mediated endocytosis. During mitosis, may act as a scaffold protein in the phosphorylation of EPSIN/EPN1 by the mitotic kinase cyclin B-CDK1, preventing endocytosis during that phase of the cell cycle. During mitosis, also controls mitochondrial fission as an effector of RALA. Recruited to mitochondrion by RALA, acts as a scaffold to foster the mitotic kinase cyclin B-CDK1-mediated phosphorylation and activation of DNM1L. In terms of biological role, could also function as a primary ATP-dependent active transporter for glutathione conjugates of electrophiles. May also actively catalyze the efflux of a wide range of substrates including xenobiotics like doxorubicin (DOX) contributing to cell multidrug resistance. In Homo sapiens (Human), this protein is RalA-binding protein 1.